The following is a 244-amino-acid chain: 1-(5-phosphoribosyl)-5-[(5-phosphoribosylamino)methylideneamino] imidazole-4-carboxamide isomerase (244 aa).

D11 acts as the Proton acceptor in catalysis. The active-site Proton donor is D132.

It belongs to the HisA/HisF family.

It is found in the cytoplasm. The enzyme catalyses 1-(5-phospho-beta-D-ribosyl)-5-[(5-phospho-beta-D-ribosylamino)methylideneamino]imidazole-4-carboxamide = 5-[(5-phospho-1-deoxy-D-ribulos-1-ylimino)methylamino]-1-(5-phospho-beta-D-ribosyl)imidazole-4-carboxamide. The protein operates within amino-acid biosynthesis; L-histidine biosynthesis; L-histidine from 5-phospho-alpha-D-ribose 1-diphosphate: step 4/9. The chain is 1-(5-phosphoribosyl)-5-[(5-phosphoribosylamino)methylideneamino] imidazole-4-carboxamide isomerase from Sphingopyxis alaskensis (strain DSM 13593 / LMG 18877 / RB2256) (Sphingomonas alaskensis).